We begin with the raw amino-acid sequence, 65 residues long: Cecropin (65 aa).

The N-terminal stretch at 1-23 is a signal peptide; that stretch reads MNFVKVLFFISACILIMLSAVSG.

The protein belongs to the cecropin family.

The protein resides in the secreted. Has antibacterial activity. This Galleria mellonella (Greater wax moth) protein is Cecropin (LOC113514368).